Here is a 100-residue protein sequence, read N- to C-terminus: Large ribosomal subunit protein bL21 (100 aa).

This sequence belongs to the bacterial ribosomal protein bL21 family. In terms of assembly, part of the 50S ribosomal subunit. Contacts protein L20.

In terms of biological role, this protein binds to 23S rRNA in the presence of protein L20. In Mycoplasma capricolum subsp. capricolum (strain California kid / ATCC 27343 / NCTC 10154), this protein is Large ribosomal subunit protein bL21.